Consider the following 326-residue polypeptide: PDZ domain-containing protein MAGIX (326 aa).

The tract at residues 1 to 32 (MDSHAGNTADPRGSRRGVGLQGSGSPRARQLL) is disordered. In terms of domain architecture, PDZ spans 128-212 (SVELVRGPAG…RLCLVLQRPQ (85 aa)). Positions 214–267 (MNGSRSKEVGGGHQKTDRIPDPRGGRMMESRGTISPVHHRPKTRTGPGPSPESV) are disordered. A compositionally biased stretch (basic and acidic residues) spans 218–242 (RSKEVGGGHQKTDRIPDPRGGRMME). Phosphoserine is present on Ser-263.

This chain is PDZ domain-containing protein MAGIX (Magix), found in Rattus norvegicus (Rat).